The chain runs to 270 residues: Small ribosomal subunit protein uS2 (270 aa).

It belongs to the universal ribosomal protein uS2 family. As to quaternary structure, component of the small ribosomal subunit. Mature ribosomes consist of a small (40S) and a large (60S) subunit. The 40S subunit contains about 33 different proteins and 1 molecule of RNA (18S). The 60S subunit contains about 49 different proteins and 3 molecules of RNA (28S, 5.8S and 5S). Interacts with oho23B/rpS21.

It is found in the cytoplasm. The protein resides in the nucleus. Functionally, required for the assembly and/or stability of the 40S ribosomal subunit. Required for the processing of the 20S rRNA-precursor to mature 18S rRNA in a late step of the maturation of 40S ribosomal subunits. Required during oogenesis and imaginal development. The polypeptide is Small ribosomal subunit protein uS2 (Drosophila persimilis (Fruit fly)).